The following is a 201-amino-acid chain: Holliday junction resolvase RecU (201 aa).

Threonine 87, aspartate 89, aspartate 102, and glutamine 121 together coordinate Mg(2+).

The protein belongs to the RecU family. Requires Mg(2+) as cofactor.

Its subcellular location is the cytoplasm. The enzyme catalyses Endonucleolytic cleavage at a junction such as a reciprocal single-stranded crossover between two homologous DNA duplexes (Holliday junction).. Functionally, endonuclease that resolves Holliday junction intermediates in genetic recombination. Cleaves mobile four-strand junctions by introducing symmetrical nicks in paired strands. Promotes annealing of linear ssDNA with homologous dsDNA. Required for DNA repair, homologous recombination and chromosome segregation. This Levilactobacillus brevis (strain ATCC 367 / BCRC 12310 / CIP 105137 / JCM 1170 / LMG 11437 / NCIMB 947 / NCTC 947) (Lactobacillus brevis) protein is Holliday junction resolvase RecU.